A 130-amino-acid chain; its full sequence is Small ribosomal subunit protein uS9 (130 aa).

It belongs to the universal ribosomal protein uS9 family.

The polypeptide is Small ribosomal subunit protein uS9 (Bacillus cytotoxicus (strain DSM 22905 / CIP 110041 / 391-98 / NVH 391-98)).